The sequence spans 417 residues: Bifunctional thiamine biosynthesis protein ThiDN (417 aa).

The segment at 1–235 (MVILAIGGYD…KSKFGYNSNP (235 aa)) is hydroxymethylpyrimidine/phosphomethylpyrimidine kinase. Gln-41 serves as a coordination point for 4-amino-5-hydroxymethyl-2-methylpyrimidine. The interval 236–417 (TYINKEKVIK…VIQKIYNTLM (182 aa)) is thiamine-phosphate synthase.

In the N-terminal section; belongs to the ThiD family. The protein in the C-terminal section; belongs to the ThiN family.

It carries out the reaction 4-amino-5-hydroxymethyl-2-methylpyrimidine + ATP = 4-amino-2-methyl-5-(phosphooxymethyl)pyrimidine + ADP + H(+). The enzyme catalyses 4-amino-2-methyl-5-(phosphooxymethyl)pyrimidine + ATP = 4-amino-2-methyl-5-(diphosphooxymethyl)pyrimidine + ADP. It catalyses the reaction 2-[(2R,5Z)-2-carboxy-4-methylthiazol-5(2H)-ylidene]ethyl phosphate + 4-amino-2-methyl-5-(diphosphooxymethyl)pyrimidine + 2 H(+) = thiamine phosphate + CO2 + diphosphate. The catalysed reaction is 2-(2-carboxy-4-methylthiazol-5-yl)ethyl phosphate + 4-amino-2-methyl-5-(diphosphooxymethyl)pyrimidine + 2 H(+) = thiamine phosphate + CO2 + diphosphate. It carries out the reaction 4-methyl-5-(2-phosphooxyethyl)-thiazole + 4-amino-2-methyl-5-(diphosphooxymethyl)pyrimidine + H(+) = thiamine phosphate + diphosphate. It functions in the pathway cofactor biosynthesis; thiamine diphosphate biosynthesis; 4-amino-2-methyl-5-diphosphomethylpyrimidine from 5-amino-1-(5-phospho-D-ribosyl)imidazole. Its pathway is cofactor biosynthesis; thiamine diphosphate biosynthesis; thiamine phosphate from 4-amino-2-methyl-5-diphosphomethylpyrimidine and 4-methyl-5-(2-phosphoethyl)-thiazole: step 1/1. Its function is as follows. Catalyzes the phosphorylation of hydroxymethylpyrimidine phosphate (HMP-P) to HMP-PP, and of HMP to HMP-P. Condenses 4-methyl-5-(beta-hydroxyethyl)thiazole monophosphate (THZ-P) and 4-amino-5-hydroxymethyl pyrimidine pyrophosphate (HMP-PP) to form thiamine monophosphate (TMP). This is Bifunctional thiamine biosynthesis protein ThiDN (thiDN) from Methanocaldococcus jannaschii (strain ATCC 43067 / DSM 2661 / JAL-1 / JCM 10045 / NBRC 100440) (Methanococcus jannaschii).